The following is a 256-amino-acid chain: 1-(5-phosphoribosyl)-5-[(5-phosphoribosylamino)methylideneamino] imidazole-4-carboxamide isomerase (256 aa).

Aspartate 8 acts as the Proton acceptor in catalysis. Residue aspartate 129 is the Proton donor of the active site.

It belongs to the HisA/HisF family.

It localises to the cytoplasm. The catalysed reaction is 1-(5-phospho-beta-D-ribosyl)-5-[(5-phospho-beta-D-ribosylamino)methylideneamino]imidazole-4-carboxamide = 5-[(5-phospho-1-deoxy-D-ribulos-1-ylimino)methylamino]-1-(5-phospho-beta-D-ribosyl)imidazole-4-carboxamide. Its pathway is amino-acid biosynthesis; L-histidine biosynthesis; L-histidine from 5-phospho-alpha-D-ribose 1-diphosphate: step 4/9. This Synechococcus elongatus (strain ATCC 33912 / PCC 7942 / FACHB-805) (Anacystis nidulans R2) protein is 1-(5-phosphoribosyl)-5-[(5-phosphoribosylamino)methylideneamino] imidazole-4-carboxamide isomerase.